Reading from the N-terminus, the 433-residue chain is Dihydrolipoyllysine-residue acetyltransferase component of pyruvate dehydrogenase complex (433 aa).

One can recognise a Lipoyl-binding domain in the interval 2-77 (AFEFRLPDIG…VVGDVIVKID (76 aa)). Lys-43 is modified (N6-lipoyllysine). 2 disordered regions span residues 80–134 (DAEE…PSVR) and 164–204 (YLNG…FPET). Basic and acidic residues-rich tracts occupy residues 84-103 (MQFK…KEQE) and 117-126 (EKTEVDESKT). Positions 128-165 (KAMPSVRKYARENGVNIKAVNGSGKNGRITKEDIDAYL) constitute a Peripheral subunit-binding (PSBD) domain. The segment covering 166–185 (NGGSSEEGSNTSAASESTSS) has biased composition (low complexity). Residue His-404 is part of the active site.

Belongs to the 2-oxoacid dehydrogenase family. In terms of assembly, forms a 24-polypeptide structural core with octahedral symmetry. Requires (R)-lipoate as cofactor.

It catalyses the reaction N(6)-[(R)-dihydrolipoyl]-L-lysyl-[protein] + acetyl-CoA = N(6)-[(R)-S(8)-acetyldihydrolipoyl]-L-lysyl-[protein] + CoA. Functionally, the pyruvate dehydrogenase complex catalyzes the overall conversion of pyruvate to acetyl-CoA and CO(2). It contains multiple copies of three enzymatic components: pyruvate dehydrogenase (E1), dihydrolipoamide acetyltransferase (E2) and lipoamide dehydrogenase (E3). The polypeptide is Dihydrolipoyllysine-residue acetyltransferase component of pyruvate dehydrogenase complex (pdhC) (Staphylococcus epidermidis (strain ATCC 35984 / DSM 28319 / BCRC 17069 / CCUG 31568 / BM 3577 / RP62A)).